Here is a 167-residue protein sequence, read N- to C-terminus: Stress-related protein (167 aa).

The protein belongs to the REF/SRPP family.

Plays a role in plant defense. The protein is Stress-related protein (SRP) of Phaseolus vulgaris (Kidney bean).